The primary structure comprises 157 residues: Protein Smg (157 aa).

The protein belongs to the Smg family.

The sequence is that of Protein Smg from Buchnera aphidicola subsp. Acyrthosiphon pisum (strain Tuc7).